The following is a 527-amino-acid chain: Phosphoenolpyruvate carboxykinase (ATP) (527 aa).

The substrate site is built by arginine 56, tyrosine 191, and lysine 197. Residues lysine 197, histidine 216, and 232 to 240 (GLSGTGKTT) each bind ATP. Mn(2+)-binding residues include lysine 197 and histidine 216. Aspartate 253 is a Mn(2+) binding site. ATP contacts are provided by residues glutamate 281, arginine 318, 437–438 (RI), and threonine 443. Residue arginine 318 participates in substrate binding.

The protein belongs to the phosphoenolpyruvate carboxykinase (ATP) family. Mn(2+) is required as a cofactor.

It is found in the cytoplasm. It carries out the reaction oxaloacetate + ATP = phosphoenolpyruvate + ADP + CO2. It participates in carbohydrate biosynthesis; gluconeogenesis. Involved in the gluconeogenesis. Catalyzes the conversion of oxaloacetate (OAA) to phosphoenolpyruvate (PEP) through direct phosphoryl transfer between the nucleoside triphosphate and OAA. The polypeptide is Phosphoenolpyruvate carboxykinase (ATP) (Shouchella clausii (strain KSM-K16) (Alkalihalobacillus clausii)).